Here is a 581-residue protein sequence, read N- to C-terminus: Membrane protein insertase YidC (581 aa).

A helical membrane pass occupies residues 7-27; it reads ILIVALAVVSYLMVLQWNEDY. Residues 41 to 62 form a disordered region; sequence AATPALPDTPADTASTGGDDIP. The next 5 membrane-spanning stretches (helical) occupy residues 365 to 385, 388 to 408, 458 to 478, 489 to 509, and 536 to 556; these read TVDY…LEVI, LLGN…LIFF, LGGC…YWVL, WMFW…PIIM, and PIIF…YWVV.

It belongs to the OXA1/ALB3/YidC family. Type 1 subfamily. As to quaternary structure, interacts with the Sec translocase complex via SecD. Specifically interacts with transmembrane segments of nascent integral membrane proteins during membrane integration.

The protein localises to the cell inner membrane. Required for the insertion and/or proper folding and/or complex formation of integral membrane proteins into the membrane. Involved in integration of membrane proteins that insert both dependently and independently of the Sec translocase complex, as well as at least some lipoproteins. Aids folding of multispanning membrane proteins. The polypeptide is Membrane protein insertase YidC (Ectopseudomonas mendocina (strain ymp) (Pseudomonas mendocina)).